A 432-amino-acid chain; its full sequence is Killer cell immunoglobulin-like receptor 3DL1 (432 aa).

The first 21 residues, 1–21, serve as a signal peptide directing secretion; the sequence is MLLWFLSLVCSGFFLVQRMSA. The Extracellular segment spans residues 22 to 335; that stretch reads HVGSHDKPFL…ADTKTNNYKN (314 aa). 3 Ig-like C2-type domains span residues 42–100, 135–202, and 238–301; these read GQNV…HPQY, GGNV…NSYY, and GETM…FRNA. Asn-44 carries N-linked (GlcNAc...) asparagine glycosylation. Cysteines 49 and 95 form a disulfide. N-linked (GlcNAc...) asparagine glycosylation occurs at Asn-137. Cystine bridges form between Cys-142–Cys-195 and Cys-245–Cys-294. Asn-300 carries N-linked (GlcNAc...) asparagine glycosylation. The helical transmembrane segment at 336 to 356 threads the bilayer; the sequence is LHILTGLLVTMVLVVIIIFYS. Residues 357 to 432 are Cytoplasmic-facing; sequence CYFSKQNKSQ…DTIVYMEIMK (76 aa).

It belongs to the immunoglobulin superfamily.

It is found in the cell membrane. Its function is as follows. Receptor on natural killer (NK) cells. Inhibits the activity of NK cells thus preventing cell lysis. In Mus musculus (Mouse), this protein is Killer cell immunoglobulin-like receptor 3DL1 (Kir3dl1).